Reading from the N-terminus, the 1623-residue chain is ATP-binding cassette sub-family A member 9 (1623 aa).

The chain crosses the membrane as a helical span at residues Leu31–Leu51. N-linked (GlcNAc...) asparagine glycosylation is present at Asn120. 6 helical membrane-spanning segments follow: residues Phe225–Ile245, Ala265–Met285, Val295–Ile315, Phe329–Ala349, Leu354–Met374, and Leu398–Leu418. An ABC transporter 1 domain is found at Ile481–His716. Gly517–Thr524 contributes to the ATP binding site. A run of 7 helical transmembrane segments spans residues Leu863–Val883, Ala1025–Ser1045, Leu1071–Phe1091, Ile1107–Ile1127, Ser1135–Ile1155, Leu1163–Ser1183, and Gln1199–Leu1219. In terms of domain architecture, ABC transporter 2 spans Leu1287 to Lys1520. Gly1325–Ser1332 is an ATP binding site.

This sequence belongs to the ABC transporter superfamily. ABCA family. In terms of tissue distribution, highly expressed in heart and to lower extent in kidney, brain and spleen. Weakly expressed in developing and adult brains. Weakly expressed in the cerebellar granular layer at P14 and P21.

The protein localises to the membrane. Functionally, transporter that may play a role in monocyte differentiation and lipid transport and homeostasis. This Mus musculus (Mouse) protein is ATP-binding cassette sub-family A member 9 (Abca9).